We begin with the raw amino-acid sequence, 3942 residues long: Protein bassoon (3942 aa).

A disordered region spans residues 1 to 158; that stretch reads MGNEASLEGG…PTSPYSVPQI (158 aa). Glycine 2 carries N-myristoyl glycine lipidation. The span at 9-29 shows a compositional bias: gly residues; the sequence is GGAGEGPLPPGGSGLGPGPGA. Low complexity predominate over residues 31-52; sequence KPPSALAGGGQLPVAGAARAAG. The segment covering 53–71 has biased composition (pro residues); that stretch reads PPTPGLGPVPGPGPGPGPG. The tract at residues 62–71 is 5 X 2 AA tandem repeats of P-G; the sequence is PGPGPGPGPG. Polar residues-rich tracts occupy residues 85 to 98 and 127 to 154; these read SQRTTSPTPKQASA and QVDSRTQRSGRSPSVSPDRGSTPTSPYS. A Phosphoserine modification is found at serine 142. The residue at position 145 (arginine 145) is an Omega-N-methylarginine. 2 consecutive C4-type zinc fingers follow at residues 167–190 and 195–217; these read CPICKTSDLTSTPSQPNFNTCTQC and CNQCGFNPNPHLTQVKEWLCLNC. Disordered regions lie at residues 228 to 341 and 362 to 457; these read TTAP…EQTQ and LMSV…KTMP. Over residues 230–240 the composition is skewed to polar residues; sequence APRSKSQQQLH. Phosphoserine occurs at positions 241 and 245. The span at 362-379 shows a compositional bias: polar residues; it reads LMSVQPEADTQGQPSPSK. Positions 395-407 are enriched in pro residues; it reads PRPPGSGPGPGPT. 2 consecutive C4-type zinc fingers follow at residues 464–487 and 492–514; these read CPLCQAELNMGSRGPANYNTCTAC and CNLCGFNPTPHLVEKTEWLCLNC. Disordered regions lie at residues 525–937, 950–1258, 1309–1553, and 1573–1625; these read GEPA…LQGG, GSYG…VAES, MDPM…WQQS, and RMVH…PSAG. Over residues 528-541 the composition is skewed to pro residues; the sequence is APLPLPTPQQPPAG. Tandem repeats lie at residues 570–576, 577–583, 584–590, 591–597, and 598–604. The segment at 570–604 is 5 X 7 AA tandem repeats of K-A-S-P-Q-[AT]-[AT]; it reads KASPQATKASPQATKASPQATKASPQTTKASPQAK. The segment covering 573–600 has biased composition (polar residues); the sequence is PQATKASPQATKASPQATKASPQTTKAS. Positions 632–645 are enriched in pro residues; the sequence is VPKPPPETTVPPGT. The segment covering 684–693 has biased composition (polar residues); that stretch reads QDLSRSPQSL. Positions 694 to 708 are enriched in low complexity; the sequence is SDTGYSSDGVSSSQS. Polar residues predominate over residues 709-718; sequence EITGVVQQEV. Acidic residues-rich tracts occupy residues 787-802 and 865-876; these read FDSDEELGDILEEDDS and SAEEDNLEEDDT. An Omega-N-methylarginine modification is found at arginine 881. Over residues 895-905 the composition is skewed to basic and acidic residues; it reads PRPESSQEPKR. Serine 980 bears the Phosphoserine mark. Residues 994–1011 are compositionally biased toward low complexity; the sequence is PASTPSYTSGTSPTSLSS. Positions 1049–1062 are enriched in acidic residues; sequence DSSEEEELREEEEL. 2 positions are modified to phosphoserine: serine 1050 and serine 1051. Over residues 1063–1076 the composition is skewed to basic and acidic residues; it reads LREQEKMREVEQQR. Phosphoserine is present on serine 1100. Position 1102 is a phosphothreonine (threonine 1102). Serine 1108 and serine 1114 each carry phosphoserine. Residues 1117 to 1132 show a composition bias toward basic and acidic residues; that stretch reads EELRQAAEMEELHRSS. 2 stretches are compositionally biased toward low complexity: residues 1133-1143 and 1173-1190; these read CSEYSPSPSLD and SPTETPSGSSTTPSSGRP. Residues 1192-1207 are compositionally biased toward basic and acidic residues; sequence KSAEEAYEDMMRKAEM. Residues 1209-1219 show a composition bias toward low complexity; sequence QRQQGQVAGAR. The span at 1226–1240 shows a compositional bias: polar residues; that stretch reads SQPTGPRSQGSFEYQ. Serine 1236 carries the post-translational modification Phosphoserine. The span at 1333–1343 shows a compositional bias: low complexity; sequence SFSTSTSSDSS. Threonine 1354 carries an O-linked (GlcNAc) threonine glycan. The segment covering 1357 to 1366 has biased composition (basic and acidic residues); that stretch reads FAKEPQDPLK. Over residues 1370–1438 the composition is skewed to polar residues; sequence SPVSSTLTSK…TTANYGSQTE (69 aa). O-linked (GlcNAc) threonine glycosylation is present at threonine 1395. A phosphoserine mark is found at serine 1482, serine 1491, and serine 1493. Residues 1488-1498 show a composition bias toward low complexity; the sequence is STPSESPTFSP. Composition is skewed to polar residues over residues 1508 to 1522 and 1573 to 1609; these read EFSTQTPSLTLSSDI and RMVHASASTSPLCSPTDSQPTSHSYSQTTPPSASQMP. Serine 1707 carries an O-linked (GlcNAc) serine glycan. Residues arginine 1792 and arginine 1796 each carry the omega-N-methylarginine modification. Arginine 1806 bears the Asymmetric dimethylarginine; alternate mark. Arginine 1806 bears the Omega-N-methylarginine; alternate mark. Position 1818 is an omega-N-methylarginine (arginine 1818). 2 disordered regions span residues 1831–1865 and 1926–1977; these read GVGLKPGPVPEPGAEPHRATPAELRSHAPPGTRKP and PSAP…QRPY. Residues 1844-1856 are compositionally biased toward basic and acidic residues; the sequence is AEPHRATPAELRS. Threonine 1934 carries an O-linked (GlcNAc) threonine glycan. Serine 1990 and serine 2046 each carry phosphoserine. An omega-N-methylarginine mark is found at arginine 2051 and arginine 2081. Asymmetric dimethylarginine is present on residues arginine 2255, arginine 2265, and arginine 2270. Threonine 2318 is a glycosylation site (O-linked (GlcNAc) threonine). Disordered regions lie at residues 2327 to 2378, 2476 to 2504, and 2524 to 2663; these read PVAP…KQQE, EQKQRQKAPFPATCEAPSRGPPPAATELA, and TEGP…STTA. A compositionally biased stretch (pro residues) spans 2329 to 2342; sequence APAPGPAPAPPPGQ. Basic and acidic residues predominate over residues 2361–2378; sequence ASEKEEASQEDRQRKQQE. Coiled-coil stretches lie at residues 2366-2422 and 2453-2483; these read EASQ…LVQR and LAQQRLQLEQIQQLQQQLQLQLEEQKQRQKA. Threonine 2524 carries O-linked (GlcNAc) threonine glycosylation. Polar residues predominate over residues 2541-2551; it reads SSASDMSLQTE. Residue serine 2578 is modified to Phosphoserine. Phosphothreonine is present on residues threonine 2595 and threonine 2622. The segment covering 2643–2655 has biased composition (basic and acidic residues); sequence RHSDSGSDSKHDA. Threonine 2700 is a glycosylation site (O-linked (GlcNAc) threonine). The segment at 2730 to 3278 is interaction with DAO; that stretch reads EPDGQAQGVA…GGVSGRPGKD (549 aa). Phosphoserine occurs at positions 2811, 2860, and 2866. Residues 2854-2874 form a disordered region; that stretch reads TLQRSLSDPKPLSPTAEESAK. Residue threonine 2945 is glycosylated (O-linked (GlcNAc) threonine). The residue at position 3022 (serine 3022) is a Phosphoserine. Disordered stretches follow at residues 3051 to 3409, 3431 to 3560, and 3581 to 3917; these read PATP…LTSR, YYGV…PRAH, and EAYH…KILP. Polar residues predominate over residues 3073 to 3083; that stretch reads TAGSSGPTQNG. The segment covering 3089–3114 has biased composition (low complexity); that stretch reads APTYTGPSTYPAPTYPPGTGYPAEPG. Basic and acidic residues predominate over residues 3202-3211; the sequence is KAPEHPRGSD. Polar residues predominate over residues 3212-3237; that stretch reads RSSVSQSPAPTYPSDSHYTSLEQNVP. Position 3301 is a phosphoserine (serine 3301). 2 stretches are compositionally biased toward basic and acidic residues: residues 3330-3342 and 3372-3391; these read GDSDYRHGARADK and QGMEQKISKFSPIEEAKDVE. Phosphoserine is present on serine 3382. The segment covering 3447-3461 has biased composition (low complexity); that stretch reads YGSSSRSRMASAYSG. A compositionally biased stretch (basic and acidic residues) spans 3464–3487; it reads LSSHDYSSRGKGYERERDTAERLQ. At arginine 3502 the chain carries Omega-N-methylarginine. A compositionally biased stretch (low complexity) spans 3520–3534; that stretch reads PLGRPRPAGGALPPG. 2 stretches are compositionally biased toward basic and acidic residues: residues 3549–3560 and 3592–3602; these read VQEHVKDGPRAH and WFDKPRDARSD. Basic residues predominate over residues 3652-3665; it reads EHRHHSDHGRHSGR. Basic and acidic residues predominate over residues 3666-3690; the sequence is HAGEEPGRRAAKPHARDMGRHEARP. The span at 3750–3820 shows a compositional bias: low complexity; it reads TQAQPQMQGR…QARLQPQSQP (71 aa). Arginine 3823 carries the post-translational modification Omega-N-methylarginine. The segment covering 3835–3851 has biased composition (pro residues); sequence KPQPGPTTAPGPQPAGP. Residues 3856 to 3891 show a composition bias toward low complexity; sequence QASSSKPPAAKAPQQGRAPQAQTTPGPGPAGAKPGA.

As to quaternary structure, interacts with PCLO, ERC2/CAST1, RIMS1 and UNC13A. Interacts with TPRG1L. Interacts with DYNLL1 and DYNLL2; these interactions potentially link PTVs to dynein and myosin V motor complexes. Interacts with ATG5; this interaction is important for the regulation of presynaptic autophagy. Interacts (via C-terminus) with TRIO (via N-terminus). Interacts with CTBP1. Interacts with SIAH1; this interaction negatively regulates SIAH1 E3 ligase activity. Interacts (via coiled region) with DAO; the interaction is direct. Post-translationally, myristoylated. The N-terminal myristoylation is not sufficient for presynaptic localization. In terms of tissue distribution, expressed in brain and retina.

The protein resides in the cytoplasm. Its subcellular location is the presynaptic active zone. The protein localises to the cytoskeleton. It localises to the cytoplasmic vesicle. It is found in the secretory vesicle. The protein resides in the synaptic vesicle membrane. Scaffold protein of the presynaptic cytomatrix at the active zone (CAZ) which is the place in the synapse where neurotransmitter is released. After synthesis, participates in the formation of Golgi-derived membranous organelles termed Piccolo-Bassoon transport vesicles (PTVs) that are transported along axons to sites of nascent synaptic contacts. At the presynaptic active zone, regulates the spatial organization of synaptic vesicle cluster, the protein complexes that execute membrane fusion and compensatory endocytosis. Also functions in processes other than assembly such as the regulation of specific presynaptic protein ubiquitination by interacting with SIAH1 or the regulation of presynaptic autophagy by associating with ATG5. Also mediates synapse to nucleus communication leading to reconfiguration of gene expression by associating with the transcriptional corepressor CTBP1 and by subsequently reducing the size of its pool available for nuclear import. Inhibits the activity of the proportion of DAO enzyme that localizes to the presynaptic active zone, which may modulate synaptic transmission. The chain is Protein bassoon from Mus musculus (Mouse).